Reading from the N-terminus, the 375-residue chain is Queuine tRNA-ribosyltransferase (375 aa).

The active-site Proton acceptor is aspartate 89. Residues 89-93 (DSGGF), aspartate 143, glutamine 187, and glycine 214 each bind substrate. An RNA binding region spans residues 245 to 251 (GVGKPED). The active-site Nucleophile is aspartate 264. An RNA binding; important for wobble base 34 recognition region spans residues 269 to 273 (TRNAR). Residues cysteine 302, cysteine 304, cysteine 307, and histidine 333 each coordinate Zn(2+).

Belongs to the queuine tRNA-ribosyltransferase family. As to quaternary structure, homodimer. Within each dimer, one monomer is responsible for RNA recognition and catalysis, while the other monomer binds to the replacement base PreQ1. It depends on Zn(2+) as a cofactor.

It catalyses the reaction 7-aminomethyl-7-carbaguanine + guanosine(34) in tRNA = 7-aminomethyl-7-carbaguanosine(34) in tRNA + guanine. The protein operates within tRNA modification; tRNA-queuosine biosynthesis. Catalyzes the base-exchange of a guanine (G) residue with the queuine precursor 7-aminomethyl-7-deazaguanine (PreQ1) at position 34 (anticodon wobble position) in tRNAs with GU(N) anticodons (tRNA-Asp, -Asn, -His and -Tyr). Catalysis occurs through a double-displacement mechanism. The nucleophile active site attacks the C1' of nucleotide 34 to detach the guanine base from the RNA, forming a covalent enzyme-RNA intermediate. The proton acceptor active site deprotonates the incoming PreQ1, allowing a nucleophilic attack on the C1' of the ribose to form the product. After dissociation, two additional enzymatic reactions on the tRNA convert PreQ1 to queuine (Q), resulting in the hypermodified nucleoside queuosine (7-(((4,5-cis-dihydroxy-2-cyclopenten-1-yl)amino)methyl)-7-deazaguanosine). The protein is Queuine tRNA-ribosyltransferase of Klebsiella pneumoniae subsp. pneumoniae (strain ATCC 700721 / MGH 78578).